The following is a 303-amino-acid chain: Putative band 7 family protein R614 (303 aa).

The protein belongs to the band 7/mec-2 family.

This chain is Putative band 7 family protein R614, found in Acanthamoeba polyphaga (Amoeba).